Reading from the N-terminus, the 208-residue chain is Small ribosomal subunit protein uS4 (208 aa).

Residues 98-161 (QRLDNVVYRM…KNNPQIVRAI (64 aa)) enclose the S4 RNA-binding domain.

Belongs to the universal ribosomal protein uS4 family. Part of the 30S ribosomal subunit. Contacts protein S5. The interaction surface between S4 and S5 is involved in control of translational fidelity.

One of the primary rRNA binding proteins, it binds directly to 16S rRNA where it nucleates assembly of the body of the 30S subunit. In terms of biological role, with S5 and S12 plays an important role in translational accuracy. The polypeptide is Small ribosomal subunit protein uS4 (Campylobacter concisus (strain 13826)).